A 364-amino-acid polypeptide reads, in one-letter code: DNA polymerase IV (364 aa).

Residues 14-198 enclose the UmuC domain; it reads IIHIDMDAFF…LPVEKFHGVG (185 aa). Mg(2+)-binding residues include D18 and D116. E117 is a catalytic residue.

It belongs to the DNA polymerase type-Y family. As to quaternary structure, monomer. It depends on Mg(2+) as a cofactor.

The protein localises to the cytoplasm. The catalysed reaction is DNA(n) + a 2'-deoxyribonucleoside 5'-triphosphate = DNA(n+1) + diphosphate. Functionally, poorly processive, error-prone DNA polymerase involved in untargeted mutagenesis. Copies undamaged DNA at stalled replication forks, which arise in vivo from mismatched or misaligned primer ends. These misaligned primers can be extended by PolIV. Exhibits no 3'-5' exonuclease (proofreading) activity. May be involved in translesional synthesis, in conjunction with the beta clamp from PolIII. The polypeptide is DNA polymerase IV (Lactococcus lactis subsp. cremoris (strain SK11)).